The sequence spans 448 residues: Trigger factor (448 aa).

In terms of domain architecture, PPIase FKBP-type spans 160–245 (GDMLLMKVES…IQEIREEKLP (86 aa)).

Belongs to the FKBP-type PPIase family. Tig subfamily.

The protein resides in the cytoplasm. The enzyme catalyses [protein]-peptidylproline (omega=180) = [protein]-peptidylproline (omega=0). Its function is as follows. Involved in protein export. Acts as a chaperone by maintaining the newly synthesized protein in an open conformation. Functions as a peptidyl-prolyl cis-trans isomerase. In Dehalococcoides mccartyi (strain ATCC BAA-2266 / KCTC 15142 / 195) (Dehalococcoides ethenogenes (strain 195)), this protein is Trigger factor.